The primary structure comprises 456 residues: tRNA modification GTPase MnmE (456 aa).

(6S)-5-formyl-5,6,7,8-tetrahydrofolate-binding residues include R26, E86, and R125. Positions 222-376 constitute a TrmE-type G domain; that stretch reads GLSTAIIGRP…IEDRINQLFF (155 aa). N232 provides a ligand contact to K(+). Residues 232–237, 251–257, and 276–279 contribute to the GTP site; these read NVGKSS, TDIEGTT, and DTAG. Residue S236 coordinates Mg(2+). K(+) contacts are provided by T251, I253, and T256. T257 contacts Mg(2+). K456 contacts (6S)-5-formyl-5,6,7,8-tetrahydrofolate.

It belongs to the TRAFAC class TrmE-Era-EngA-EngB-Septin-like GTPase superfamily. TrmE GTPase family. As to quaternary structure, homodimer. Heterotetramer of two MnmE and two MnmG subunits. K(+) serves as cofactor.

Its subcellular location is the cytoplasm. Its function is as follows. Exhibits a very high intrinsic GTPase hydrolysis rate. Involved in the addition of a carboxymethylaminomethyl (cmnm) group at the wobble position (U34) of certain tRNAs, forming tRNA-cmnm(5)s(2)U34. This is tRNA modification GTPase MnmE from Streptococcus thermophilus (strain CNRZ 1066).